An 856-amino-acid chain; its full sequence is Envelope glycoprotein gp160 (856 aa).

The first 32 residues, 1–32 (MRVKEKYQHLWRWGWRWGTMLLGMLMICSATE), serve as a signal peptide directing secretion. Topologically, residues 33-684 (KLWVTVYYGV…ITNWLWYIKL (652 aa)) are extracellular. A disulfide bridge links cysteine 54 with cysteine 74. Asparagine 88, asparagine 136, asparagine 141, asparagine 156, asparagine 160, asparagine 186, asparagine 197, asparagine 230, asparagine 234, asparagine 241, asparagine 262, asparagine 276, asparagine 289, asparagine 295, asparagine 301, asparagine 332, asparagine 339, and asparagine 356 each carry an N-linked (GlcNAc...) asparagine; by host glycan. Disulfide bonds link cysteine 119/cysteine 205, cysteine 126/cysteine 196, cysteine 131/cysteine 157, cysteine 218/cysteine 247, and cysteine 228/cysteine 239. Positions 131-156 (CTDLKNDTNTNSSSGRMIMEKGEIKN) are V1. Positions 157-196 (CSFNISTSIRGKVQKEYAFFYKLDIIPIDNDTTSYKLTSC) are V2. The segment at 296-330 (CTRPNNNTRKRIRIQRGPGRAFVTIGKIGNMRQAH) is V3. Cysteine 296 and cysteine 331 are oxidised to a cystine. The CD4-binding loop stretch occupies residues 364–374 (SSGGDPEIVTH). Disulfide bonds link cysteine 378–cysteine 445 and cysteine 385–cysteine 418. Residues 385–418 (CNSTQLFNSTWFNSTWSTEGSNNTEGSDTITLPC) are V4. Asparagine 386, asparagine 392, asparagine 397, asparagine 406, asparagine 448, and asparagine 463 each carry an N-linked (GlcNAc...) asparagine; by host glycan. V5 stretches follow at residues 461–471 (SNNESEIFRPG) and 463–471 (NESEIFRPG). The interval 512 to 532 (AVGIGALFLGFLGAAGSTMGA) is fusion peptide. Positions 574–592 (KQLQARILAVERYLKDQQL) are immunosuppression. Cysteine 598 and cysteine 604 are joined by a disulfide. Asparagine 611, asparagine 616, asparagine 624, asparagine 637, and asparagine 674 each carry an N-linked (GlcNAc...) asparagine; by host glycan. The stretch at 633-667 (REINNYTSLIHSLIEESQNQQEKNEQELLELDKWA) forms a coiled coil. Residues 662 to 683 (ELDKWASLWNWFNITNWLWYIK) are MPER; binding to GalCer. A helical membrane pass occupies residues 685–705 (FIMIVGGLVGLRIVFAVLSIV). Topologically, residues 706–856 (NRVRQGYSPL…IRQGLERILL (151 aa)) are cytoplasmic. The YXXL motif; contains endocytosis signal signature appears at 712-715 (YSPL). The interval 718-742 (QTHLPTPRGPDRPEGIEEEGGERDR) is disordered. 2 S-palmitoyl cysteine; by host lipidation sites follow: cysteine 764 and cysteine 837. Positions 855-856 (LL) match the Di-leucine internalization motif motif.

This sequence belongs to the HIV-1 env protein family. The mature envelope protein (Env) consists of a homotrimer of non-covalently associated gp120-gp41 heterodimers. The resulting complex protrudes from the virus surface as a spike. There seems to be as few as 10 spikes on the average virion. Interacts with host CD4, CCR5 and CXCR4. Gp120 also interacts with the C-type lectins CD209/DC-SIGN and CLEC4M/DC-SIGNR (collectively referred to as DC-SIGN(R)). Gp120 and gp41 interact with GalCer. Gp120 interacts with host ITGA4/ITGB7 complex; on CD4+ T-cells, this interaction results in rapid activation of integrin ITGAL/LFA-1, which facilitates efficient cell-to-cell spreading of HIV-1. Gp120 interacts with cell-associated heparan sulfate; this interaction increases virus infectivity on permissive cells and may be involved in infection of CD4- cells. In terms of assembly, the mature envelope protein (Env) consists of a homotrimer of non-covalently associated gp120-gp41 heterodimers. The resulting complex protrudes from the virus surface as a spike. There seems to be as few as 10 spikes on the average virion. In terms of processing, palmitoylation of the transmembrane protein and of Env polyprotein (prior to its proteolytic cleavage) is essential for their association with host cell membrane lipid rafts. Palmitoylation is therefore required for envelope trafficking to classical lipid rafts, but not for viral replication. Highly glycosylated by host. The high number of glycan on the protein is reffered to as 'glycan shield' because it contributes to hide protein sequence from adaptive immune system. Post-translationally, specific enzymatic cleavages in vivo yield mature proteins. Envelope glycoproteins are synthesized as an inactive precursor that is heavily N-glycosylated and processed likely by host cell furin in the Golgi to yield the mature SU and TM proteins. The cleavage site between SU and TM requires the minimal sequence [KR]-X-[KR]-R. About 2 of the 9 disulfide bonds of gp41 are reduced by P4HB/PDI, following binding to CD4 receptor.

It localises to the virion membrane. It is found in the host cell membrane. The protein localises to the host endosome membrane. Oligomerizes in the host endoplasmic reticulum into predominantly trimers. In a second time, gp160 transits in the host Golgi, where glycosylation is completed. The precursor is then proteolytically cleaved in the trans-Golgi and thereby activated by cellular furin or furin-like proteases to produce gp120 and gp41. Its function is as follows. Attaches the virus to the host lymphoid cell by binding to the primary receptor CD4. This interaction induces a structural rearrangement creating a high affinity binding site for a chemokine coreceptor like CXCR4 and/or CCR5. Acts as a ligand for CD209/DC-SIGN and CLEC4M/DC-SIGNR, which are respectively found on dendritic cells (DCs), and on endothelial cells of liver sinusoids and lymph node sinuses. These interactions allow capture of viral particles at mucosal surfaces by these cells and subsequent transmission to permissive cells. HIV subverts the migration properties of dendritic cells to gain access to CD4+ T-cells in lymph nodes. Virus transmission to permissive T-cells occurs either in trans (without DCs infection, through viral capture and transmission), or in cis (following DCs productive infection, through the usual CD4-gp120 interaction), thereby inducing a robust infection. In trans infection, bound virions remain infectious over days and it is proposed that they are not degraded, but protected in non-lysosomal acidic organelles within the DCs close to the cell membrane thus contributing to the viral infectious potential during DCs' migration from the periphery to the lymphoid tissues. On arrival at lymphoid tissues, intact virions recycle back to DCs' cell surface allowing virus transmission to CD4+ T-cells. Functionally, acts as a class I viral fusion protein. Under the current model, the protein has at least 3 conformational states: pre-fusion native state, pre-hairpin intermediate state, and post-fusion hairpin state. During fusion of viral and target intracellular membranes, the coiled coil regions (heptad repeats) assume a trimer-of-hairpins structure, positioning the fusion peptide in close proximity to the C-terminal region of the ectodomain. The formation of this structure appears to drive apposition and subsequent fusion of viral and target cell membranes. Complete fusion occurs in host cell endosomes and is dynamin-dependent, however some lipid transfer might occur at the plasma membrane. The virus undergoes clathrin-dependent internalization long before endosomal fusion, thus minimizing the surface exposure of conserved viral epitopes during fusion and reducing the efficacy of inhibitors targeting these epitopes. Membranes fusion leads to delivery of the nucleocapsid into the cytoplasm. This is Envelope glycoprotein gp160 from Homo sapiens (Human).